The primary structure comprises 250 residues: MSDLTSTILFEHPLNEKMRTWLRMEFLLQQLESQRTLDNIASALTFFRTASDLIDVLERGEVRTDLLKELERQQQKLQLWADMPGVDMSLVDSLRSQLKSRASVLMSAPRIGQSLKEDRLISVVRQRLSIPGGCCSFDLPTLHTWLHQPQEQRNQHIDKLLTSLTPLNQSLTIILNLIRQSGPLRAQISLNGFFQDNAEGADLLRLRLPLDPQLYPQISGHKTRYAIRFLPLDSENGTVPARLSFELACC.

The protein belongs to the ZapD family. In terms of assembly, interacts with FtsZ.

It localises to the cytoplasm. Cell division factor that enhances FtsZ-ring assembly. Directly interacts with FtsZ and promotes bundling of FtsZ protofilaments, with a reduction in FtsZ GTPase activity. The polypeptide is Cell division protein ZapD (Yersinia enterocolitica serotype O:8 / biotype 1B (strain NCTC 13174 / 8081)).